The primary structure comprises 489 residues: Occludin (489 aa).

The Cytoplasmic portion of the chain corresponds to 1 to 51 (MMYEKRSYTGYGHPSSHYDYPPPSGPPGSFYLADVPPQHFYQWRSPPGIVR). Residues 45–248 (SPPGIVRILQ…ICYFAQKTRH (204 aa)) form the MARVEL domain. A helical membrane pass occupies residues 52–74 (ILQGSVVILCLVIFACVASTLAW). At 75-112 (EYYGSGGLLGYGGGLGSYYNGYYGGYNGYYYGGLTNPR) the chain is on the extracellular side. A helical transmembrane segment spans residues 113-137 (AANGFMIAMAVLCFLVTLGLVIAGL). The Cytoplasmic portion of the chain corresponds to 138–147 (SKASGARSRR). Residues 148 to 172 (FYLLVAVLSGLLAFVMLIASIVYVV) form a helical membrane-spanning segment. The Extracellular portion of the chain corresponds to 173-222 (GVNPRAGLGASSGSLYYNQMLMLCNQMMSPVAGGIMNQYLYHYCMVDPQE). Residues Cys-196 and Cys-216 are joined by a disulfide bond. Residues 223 to 244 (AVAIVCGFLTVILLCVICYFAQ) traverse the membrane as a helical segment. The Cytoplasmic portion of the chain corresponds to 245–489 (KTRHKIWKYG…MVGGYDQSRS (245 aa)). Ser-280 carries the post-translational modification Phosphoserine. Position 285 is a phosphothreonine (Thr-285). The residue at position 300 (Ser-300) is a Phosphoserine. Positions 308-382 (PAQENGYGHS…ESSGEQNRDD (75 aa)) are disordered. Positions 322-332 (PSVPPPEGPSP) are enriched in pro residues. Positions 345 to 354 (PARRGHRQRP) are enriched in basic residues. Tyr-364 and Tyr-368 each carry phosphotyrosine. Residues 365–377 (ETDYTTAAESSGE) are compositionally biased toward polar residues. Phosphothreonine; by PKC/PRKCH occurs at positions 369 and 370. At Ser-374 the chain carries Phosphoserine. In terms of domain architecture, OCEL spans 381–489 (DDWASLYPPI…MVGGYDQSRS (109 aa)). Residues 407-434 (LQRYKALCAEMDDIGTQLRQLSHELDCL) adopt a coiled-coil conformation. Ser-457 is subject to Phosphoserine.

This sequence belongs to the ELL/occludin family. In terms of assembly, interacts with TJP1/ZO1. Interacts with VAPA. Interacts with CLDN1, CLDN6, CLDN9, CLDN11, CLDN12 and CLDN17. Interacts with PLSCR1. Interacts with LSR, ILDR1 and ILDR2. Interacts with TJP2/ZO2. In terms of processing, dephosphorylated by PTPRJ. In terms of tissue distribution, localized at tight junctions of both epithelial and endothelial cells.

It is found in the cell membrane. The protein localises to the cell junction. The protein resides in the tight junction. May play a role in the formation and regulation of the tight junction (TJ) paracellular permeability barrier. In Potorous tridactylus (Potoroo), this protein is Occludin (OCLN).